A 439-amino-acid chain; its full sequence is Methylenetetrahydrofolate--tRNA-(uracil-5-)-methyltransferase TrmFO (439 aa).

9-14 (GAGLAG) lines the FAD pocket.

The protein belongs to the MnmG family. TrmFO subfamily. The cofactor is FAD.

It is found in the cytoplasm. The catalysed reaction is uridine(54) in tRNA + (6R)-5,10-methylene-5,6,7,8-tetrahydrofolate + NADH + H(+) = 5-methyluridine(54) in tRNA + (6S)-5,6,7,8-tetrahydrofolate + NAD(+). The enzyme catalyses uridine(54) in tRNA + (6R)-5,10-methylene-5,6,7,8-tetrahydrofolate + NADPH + H(+) = 5-methyluridine(54) in tRNA + (6S)-5,6,7,8-tetrahydrofolate + NADP(+). Functionally, catalyzes the folate-dependent formation of 5-methyl-uridine at position 54 (M-5-U54) in all tRNAs. The chain is Methylenetetrahydrofolate--tRNA-(uracil-5-)-methyltransferase TrmFO from Desulforudis audaxviator (strain MP104C).